Here is a 314-residue protein sequence, read N- to C-terminus: Nodulation protein D 1 (314 aa).

One can recognise an HTH lysR-type domain in the interval 6–63 (LDLNLLVALDAVMTARNLTAAARKINLSQPAMSAAIARLRTYFRDELFTMRGRELVPT). Residues 23 to 42 (LTAAARKINLSQPAMSAAIA) constitute a DNA-binding region (H-T-H motif).

The protein belongs to the LysR transcriptional regulatory family.

In terms of biological role, nodD regulates the expression of the nodABCFE genes which encode other nodulation proteins. NodD is also a negative regulator of its own expression. Binds flavonoids as inducers. The chain is Nodulation protein D 1 (nodD1) from Bradyrhizobium diazoefficiens (strain JCM 10833 / BCRC 13528 / IAM 13628 / NBRC 14792 / USDA 110).